Reading from the N-terminus, the 225-residue chain is Small ribosomal subunit protein eS1 (225 aa).

Belongs to the eukaryotic ribosomal protein eS1 family.

This Methanococcus maripaludis (strain C6 / ATCC BAA-1332) protein is Small ribosomal subunit protein eS1.